The chain runs to 32 residues: Islet amyloid polypeptide (32 aa).

Belongs to the calcitonin family. Can form homodimers. Interacts with IDE and INS. Interaction with INS inhibits homodimerization and fibril formation.

It localises to the secreted. In terms of biological role, amylin/IAPP is a glucoregulatory peptide hormone that plays an important role in the regulation of energy homeostasis. Selectively inhibits insulin-stimulated glucose utilization and glycogen deposition in muscle, while not affecting adipocyte glucose metabolism. IAPP function is mediated by the CALCR-RAMPs (AMYRs) receptor complexes. Amylin can also bind CALCR receptor in the absence of RAMPs, although it is more selective for AMYRs. The polypeptide is Islet amyloid polypeptide (IAPP) (Saguinus oedipus (Cotton-top tamarin)).